The chain runs to 6077 residues: Nonribosomal peptide synthetase nlsA (6077 aa).

The interval 417–618 (VFAYAPLIHG…LGRKDSQIKL (202 aa)) is adenylation 1. One can recognise a Carrier 1 domain in the interval 751 to 827 (HSEVTVEDRL…DLVTRVQEIK (77 aa)). An O-(pantetheine 4'-phosphoryl)serine modification is found at S788. 2 condensation regions span residues 842–1267 (LSPI…GKRL) and 1309–1737 (EDIY…KQRI). Adenylation regions lie at residues 1757–2149 (QEKM…YLGE) and 2755–3157 (DRVI…QVKL). One can recognise a Carrier 2 domain in the interval 3297–3373 (AVERAAESTL…DMAKCCDDTE (77 aa)). S3334 carries the post-translational modification O-(pantetheine 4'-phosphoryl)serine. Positions 3524-3779 (DSRYRQCLYK…LLSVPRDSLM (256 aa)) are condensation 3. The segment at 3816–4213 (ENAIMHPQAT…LGRKDHQVKL (398 aa)) is adenylation 4. In terms of domain architecture, Carrier 3 spans 4361–4437 (REGDATPAII…ELAVSCGTKP (77 aa)). S4398 is modified (O-(pantetheine 4'-phosphoryl)serine). Condensation stretches follow at residues 4451–4869 (PLSP…RVLE) and 4916–5260 (VEDI…EDKT). Residues 5334–5410 (RAPNDSEKQL…NMMALINDRK (77 aa)) enclose the Carrier 4 domain. At S5371 the chain carries O-(pantetheine 4'-phosphoryl)serine. The tract at residues 5476 to 5885 (DVLPVTDFQA…SLVANPNVAL (410 aa)) is condensation 6. Residues 5921-6004 (SEILVHSDLI…GHMAVLALNM (84 aa)) form the Carrier 5 domain. Residues 6013 to 6027 (DSDAAPAPAYAPVDA) show a composition bias toward low complexity. A disordered region spans residues 6013–6047 (DSDAAPAPAYAPVDARASRNVSTSRQQQEGLPLPA). The span at 6031–6041 (RNVSTSRQQQE) shows a compositional bias: polar residues.

This sequence belongs to the NRP synthetase family.

It functions in the pathway secondary metabolite biosynthesis. In terms of biological role, nonribosomal peptide synthetase involved in the synthesis of nidulanin A and derived compounds. Nidulanin A is a tetracyclopeptide with the sequence L-Phe-L-Kyn-L-Val-D-Val and an isoprene unit N-linked to the amino group of L-kynurenine. The NRPS nlsA is responsible of the synthesis of the cyclopeptide and the prenyltransferase nptA adds the isoprene unit on the L-kynurenine residue of nidulanin A. Further modifications lead to additional oxygenated related compounds. The sequence is that of Nonribosomal peptide synthetase nlsA from Emericella nidulans (strain FGSC A4 / ATCC 38163 / CBS 112.46 / NRRL 194 / M139) (Aspergillus nidulans).